A 222-amino-acid chain; its full sequence is DUF1769 family protein (222 aa).

Belongs to the UPF0590 family.

The protein resides in the cytoplasm. Its subcellular location is the nucleus. This Schizosaccharomyces pombe (strain 972 / ATCC 24843) (Fission yeast) protein is DUF1769 family protein.